The primary structure comprises 431 residues: Enolase (431 aa).

Gln163 serves as a coordination point for (2R)-2-phosphoglycerate. Glu205 functions as the Proton donor in the catalytic mechanism. 3 residues coordinate Mg(2+): Asp242, Glu288, and Asp315. (2R)-2-phosphoglycerate-binding residues include Lys340, Arg369, Ser370, and Lys391. The Proton acceptor role is filled by Lys340.

It belongs to the enolase family. It depends on Mg(2+) as a cofactor.

It localises to the cytoplasm. The protein resides in the secreted. It is found in the cell surface. The catalysed reaction is (2R)-2-phosphoglycerate = phosphoenolpyruvate + H2O. It participates in carbohydrate degradation; glycolysis; pyruvate from D-glyceraldehyde 3-phosphate: step 4/5. Functionally, catalyzes the reversible conversion of 2-phosphoglycerate (2-PG) into phosphoenolpyruvate (PEP). It is essential for the degradation of carbohydrates via glycolysis. This chain is Enolase, found in Bacillus anthracis (strain A0248).